We begin with the raw amino-acid sequence, 330 residues long: Carbonic anhydrase 1 (330 aa).

Residues 1-109 (MSTASAFAIN…AAARIDQITA (109 aa)) form a chloroplast transit peptide-like region.

This sequence belongs to the beta-class carbonic anhydrase family. Homohexamer.

It is found in the cytoplasm. The catalysed reaction is hydrogencarbonate + H(+) = CO2 + H2O. Reversible hydration of carbon dioxide. This chain is Carbonic anhydrase 1, found in Flaveria linearis (Narrowleaf yellowtops).